The primary structure comprises 145 residues: Deoxyuridine 5'-triphosphate nucleotidohydrolase (145 aa).

Residues 62–64, Asn-75, 79–81, and Lys-89 each bind substrate; these read RSG and TVD.

Belongs to the dUTPase family. It depends on Mg(2+) as a cofactor.

The catalysed reaction is dUTP + H2O = dUMP + diphosphate + H(+). The protein operates within pyrimidine metabolism; dUMP biosynthesis; dUMP from dCTP (dUTP route): step 2/2. In terms of biological role, this enzyme is involved in nucleotide metabolism: it produces dUMP, the immediate precursor of thymidine nucleotides and it decreases the intracellular concentration of dUTP so that uracil cannot be incorporated into DNA. This chain is Deoxyuridine 5'-triphosphate nucleotidohydrolase, found in Helicobacter pylori (strain Shi470).